The following is a 395-amino-acid chain: L-rhamnonate dehydratase (395 aa).

Positions 23 and 49 each coordinate substrate. Residues Asp-215, Glu-241, and Glu-269 each contribute to the Mg(2+) site. His-319 (proton acceptor) is an active-site residue. A substrate-binding site is contributed by Glu-339.

The protein belongs to the mandelate racemase/muconate lactonizing enzyme family. RhamD subfamily. As to quaternary structure, homooctamer; tetramer of dimers. The cofactor is Mg(2+).

The enzyme catalyses L-rhamnonate = 2-dehydro-3-deoxy-L-rhamnonate + H2O. In terms of biological role, catalyzes the dehydration of L-rhamnonate to 2-keto-3-deoxy-L-rhamnonate (KDR). The chain is L-rhamnonate dehydratase (rhmD) from Polaromonas sp. (strain JS666 / ATCC BAA-500).